A 162-amino-acid polypeptide reads, in one-letter code: HTH-type transcriptional regulator IscR (162 aa).

The 130-residue stretch at 2 to 131 (RLTSKGRYAV…NNITLGELVN (130 aa)) folds into the HTH rrf2-type domain. Positions 28 to 51 (LADISERQGISLSYLEQLFSRLRK) form a DNA-binding region, H-T-H motif. Residues Cys-92, Cys-98, and Cys-104 each contribute to the [2Fe-2S] cluster site.

[2Fe-2S] cluster is required as a cofactor.

Regulates the transcription of several operons and genes involved in the biogenesis of Fe-S clusters and Fe-S-containing proteins. The sequence is that of HTH-type transcriptional regulator IscR from Shigella sonnei (strain Ss046).